Reading from the N-terminus, the 763-residue chain is Putative pentatricopeptide repeat-containing protein At1g74580 (763 aa).

19 PPR repeats span residues 39–69 (TLST…MREN), 75–109 (LEGV…DCEP), 110–144 (TVFS…GITP), 145–179 (DVYS…GCEM), 180–214 (NVVA…GVSL), 215–249 (CLST…GVLP), 250–284 (NLFT…GPKP), 285–319 (DVIT…GLEP), 320–354 (DSYT…GFVP), 355–389 (DQFT…GIKP), 390–424 (NVIL…GLIP), 425–459 (EVQT…GYFP), 460–494 (DIFT…GVDP), 495–529 (DVYT…GCAP), 530–564 (NLFT…SVNP), 565–595 (DAVT…MEEA), 601–635 (STPT…CLGP), 636–670 (DGYT…GFIP), and 671–705 (SLTT…GLVP).

It belongs to the PPR family. P subfamily.

The protein is Putative pentatricopeptide repeat-containing protein At1g74580 of Arabidopsis thaliana (Mouse-ear cress).